Consider the following 204-residue polypeptide: Probable calcium-binding protein CML46 (204 aa).

EF-hand domains follow at residues 72–106 (LEFQTSIKHEEYRDDDDDGLCREDVGMVMKSLGLS), 132–167 (PSLEEVKQAFDVFDENRDGFIDPIDLQRVLTILGLK), and 170–204 (SNLENCRRMIRSFDGSKDGRIDFYGFVKFMENNFC). Ca(2+)-binding residues include Asp145, Asn147, Asp149, and Asp156.

In terms of biological role, potential calcium sensor. This is Probable calcium-binding protein CML46 from Arabidopsis thaliana (Mouse-ear cress).